We begin with the raw amino-acid sequence, 84 residues long: DNA-directed RNA polymerase subunit Rpo5 (84 aa).

This sequence belongs to the archaeal Rpo5/eukaryotic RPB5 RNA polymerase subunit family. Part of the RNA polymerase complex.

It localises to the cytoplasm. The catalysed reaction is RNA(n) + a ribonucleoside 5'-triphosphate = RNA(n+1) + diphosphate. DNA-dependent RNA polymerase (RNAP) catalyzes the transcription of DNA into RNA using the four ribonucleoside triphosphates as substrates. The polypeptide is DNA-directed RNA polymerase subunit Rpo5 (Saccharolobus islandicus (strain Y.N.15.51 / Yellowstone #2) (Sulfolobus islandicus)).